Here is a 1774-residue protein sequence, read N- to C-terminus: Receptor-mediated endocytosis protein 6 homolog (1774 aa).

The 240-residue stretch at 157–396 (ELLLKLLREL…EDVVAILPQQ (240 aa)) folds into the Ras-GAP domain. 8 disordered regions span residues 444–480 (IPKQ…NNRS), 517–564 (PLAN…PAPT), 661–727 (AAHS…HHHG), 784–811 (ENTL…RNFS), 869–947 (AEID…EDSA), 983–1102 (ESSF…EEQP), 1115–1142 (QEEQ…SMEQ), and 1214–1342 (RAGA…GGRS). 2 stretches are compositionally biased toward low complexity: residues 519–533 (ANGQ…SASN) and 540–557 (SSHS…AAPA). The segment covering 674–683 (QQERDVHENE) has biased composition (basic and acidic residues). Residues 688–713 (DMVSANVSGRGTPNISGRDTPSSQVT) show a composition bias toward polar residues. The span at 794–809 (RGGDRGDRGDRDRDRN) shows a compositional bias: basic and acidic residues. Over residues 887–905 (PGSGGGAGVPEAGGGGGVV) the composition is skewed to gly residues. Over residues 929–944 (DPDRERLRNGSERSQE) the composition is skewed to basic and acidic residues. Residues 1011-1027 (MRRQTSAESSISNQSLN) show a composition bias toward polar residues. A compositionally biased stretch (basic residues) spans 1038–1047 (LAKHHHHHQH). Positions 1048 to 1060 (RDRDRDRDRDRDH) are enriched in basic and acidic residues. A compositionally biased stretch (basic residues) spans 1061 to 1076 (REHHHKSAALKKKKHQ). A compositionally biased stretch (basic and acidic residues) spans 1077–1087 (EHKEHQHRDLI). The span at 1091-1101 (DCSEDKDEEEQ) shows a compositional bias: acidic residues. A compositionally biased stretch (low complexity) spans 1115–1125 (QEEQQQQQQQQ). The span at 1246-1291 (SADKEQQPYRDRERERDRERDRERDRDRERDRDRDRDRDRDREHHS) shows a compositional bias: basic and acidic residues. Residues 1310-1335 (SSSSKNNAIAIAAPSSINPNPSPSSA) are compositionally biased toward low complexity. A coiled-coil region spans residues 1516–1546 (RHRQQLLLRSEQLEQLEVRLRSEARSCQRCL). The 140-residue stretch at 1635–1774 (VSRDTVLSAH…KFIKTMDYLD (140 aa)) folds into the VPS9 domain.

It belongs to the GAPVD1 family.

It is found in the membrane. In terms of biological role, acts both as a GTPase-activating protein (GAP) and a guanine nucleotide exchange factor (GEF), and participates in endocytosis. This chain is Receptor-mediated endocytosis protein 6 homolog, found in Drosophila pseudoobscura pseudoobscura (Fruit fly).